The following is a 428-amino-acid chain: Histidine--tRNA ligase (428 aa).

It belongs to the class-II aminoacyl-tRNA synthetase family. In terms of assembly, homodimer.

The protein localises to the cytoplasm. It carries out the reaction tRNA(His) + L-histidine + ATP = L-histidyl-tRNA(His) + AMP + diphosphate + H(+). The chain is Histidine--tRNA ligase from Mesomycoplasma hyopneumoniae (strain 7448) (Mycoplasma hyopneumoniae).